The chain runs to 264 residues: NFAT activation molecule 1 (264 aa).

The N-terminal stretch at Met1–Gln37 is a signal peptide. Residues Leu38 to Ala159 are Extracellular-facing. An Ig-like V-type domain is found at Leu49–Arg145. An intrachain disulfide couples Cys64 to Cys110. Asn105 and Asn118 each carry an N-linked (GlcNAc...) asparagine glycan. The helical transmembrane segment at Leu160–Leu180 threads the bilayer. At Trp181 to Leu264 the chain is on the cytoplasmic side. Residues Glu212–Glu232 form the ITAM domain. Phosphotyrosine is present on residues Tyr215 and Tyr226.

No direct interaction with the B-cell antigen receptor (BCR). Interacts with SYK; probably involved in BCR signaling. Interacts with ZAP70. Post-translationally, N-glycosylated. Highly expressed in the spleen, expressed by both B- and CD4+ and CD8+ T-cells, as well as non-T- and non-B-cells, including macrophages and neutrophils. Expressed at low levels, if any, in non-immune tissue.

It is found in the cell membrane. May function in immune system as a receptor which activates via the calcineurin/NFAT-signaling pathway the downstream cytokine gene promoters. Activates the transcription of IL-13 and TNF-alpha promoters. May be involved in the regulation of B-cell, but not T-cell, development. The sequence is that of NFAT activation molecule 1 (Nfam1) from Mus musculus (Mouse).